A 376-amino-acid polypeptide reads, in one-letter code: Deoxyguanosinetriphosphate triphosphohydrolase-like protein (376 aa).

One can recognise an HD domain in the interval 62–198 (RLTHSLEVSA…AALADDISYI (137 aa)).

The protein belongs to the dGTPase family. Type 2 subfamily.

The chain is Deoxyguanosinetriphosphate triphosphohydrolase-like protein from Rickettsia canadensis (strain McKiel).